We begin with the raw amino-acid sequence, 26 residues long: Dermaseptin-B5 (26 aa).

The residue at position 26 (Val26) is a Valine amide.

This sequence belongs to the frog skin active peptide (FSAP) family. Dermaseptin subfamily. Expressed by the skin glands.

It is found in the secreted. Functionally, possesses a potent antimicrobial activity against Gram-positive and Gram-negative bacteria. Probably acts by disturbing membrane functions with its amphipathic structure. In Phyllomedusa bicolor (Two-colored leaf frog), this protein is Dermaseptin-B5.